The chain runs to 269 residues: tRNA pseudouridine synthase A (269 aa).

The active-site Nucleophile is the aspartate 55. Position 111 (tyrosine 111) interacts with substrate.

Belongs to the tRNA pseudouridine synthase TruA family.

It catalyses the reaction uridine(38/39/40) in tRNA = pseudouridine(38/39/40) in tRNA. In terms of biological role, formation of pseudouridine at positions 38, 39 and 40 in the anticodon stem and loop of transfer RNAs. In Methanosarcina barkeri (strain Fusaro / DSM 804), this protein is tRNA pseudouridine synthase A.